The chain runs to 89 residues: Barrier-to-autointegration factor 1 (89 aa).

This sequence belongs to the BAF family. Interacts with emr-1 and lem-2. Interacts with lem-4l, leading to decreased phosphorylation by VRK1 and promoting dephosphorylation by protein phosphatase 2A (PP2A). Phosphorylated by vrk-1. Phosphorylation by vrk-1 in mitosis is essential to achieve correct timing of recruitment of nuclear envelope components during nuclear envelope assembly. Dephosphorylated by protein phosphatase 2A (PP2A) following interaction with lem-4l during mitotic exit, leading to mitotic nuclear envelope reassembly.

The protein resides in the nucleus. DNA-binding protein which plays an essential role in nuclear envelope formation. Required for normal chromosome segregation during mitosis. Associates with the nuclear lamina via its interaction with LEM domain containing proteins emr-1 and lem-2. In association with lem-3, plays a role in radiation-induced DNA damage repair response. The chain is Barrier-to-autointegration factor 1 (baf-1) from Caenorhabditis elegans.